Reading from the N-terminus, the 120-residue chain is MESLPGQIDKSLDEASLSLRAGSLRTITHILLPLLRPAILSALIYSFVRAITTVSAIVFLVTPDTRVATAYILNRVEDGEYGVAIAYGSILIVVMLAIIFIFDWLIGESRTSRSKAKNQA.

Residues 1-38 lie on the Cytoplasmic side of the membrane; sequence MESLPGQIDKSLDEASLSLRAGSLRTITHILLPLLRPA. One can recognise an ABC transmembrane type-1 domain in the interval 1-102; sequence MESLPGQIDK…VVMLAIIFIF (102 aa). A helical membrane pass occupies residues 39–59; that stretch reads ILSALIYSFVRAITTVSAIVF. The Periplasmic portion of the chain corresponds to 60–81; it reads LVTPDTRVATAYILNRVEDGEY. A helical membrane pass occupies residues 82–102; that stretch reads GVAIAYGSILIVVMLAIIFIF. Over 103–120 the chain is Cytoplasmic; that stretch reads DWLIGESRTSRSKAKNQA.

The protein belongs to the binding-protein-dependent transport system permease family. FbpB subfamily.

It localises to the cell inner membrane. Functionally, a severely truncated paralog of the AfuB uptake protein, homologous only to the last 20% of the intact protein in Actinobacillus. The protein is Putative ferric transport system permease-like protein AfuB (afuB) of Escherichia coli (strain K12).